A 451-amino-acid polypeptide reads, in one-letter code: UDP-N-acetyl-alpha-D-muramoyl-L-alanyl-L-glutamate epimerase (451 aa).

Belongs to the MurL family.

The enzyme catalyses UDP-N-acetyl-alpha-D-muramoyl-L-alanyl-L-glutamate + ATP + H2O = UDP-N-acetyl-alpha-D-muramoyl-L-alanyl-D-glutamate + AMP + diphosphate + H(+). It functions in the pathway cell wall biogenesis; peptidoglycan biosynthesis. Its function is as follows. Cell wall formation. Catalyzes epimerization of the terminal L-glutamate in UDP-N-acetyl-alpha-D-muramoyl-L-alanyl-L-glutamate. This Xanthomonas oryzae pv. oryzae (strain MAFF 311018) protein is UDP-N-acetyl-alpha-D-muramoyl-L-alanyl-L-glutamate epimerase.